The following is a 116-amino-acid chain: RNA guanine-N7 methyltransferase activating subunit (116 aa).

An interaction with RNMT region spans residues 1 to 55; the sequence is MAEALGAQELYEKMFEQRFTANDKEYQEYLKREQDQPPIVEDWKMGNQRNTDRYR. The segment at 31 to 116 is disordered; it reads KREQDQPPIV…SNQRFHSDRY (86 aa). The short motif at 36-42 is the RNMT-activating domain element; that stretch reads QPPIVED. The interval 56–116 is RNA-binding; it reads DNRHHRGWDG…SNQRFHSDRY (61 aa). The segment covering 67 to 78 has biased composition (low complexity); that stretch reads QNWSSNSYNQSY. Polar residues predominate over residues 97 to 110; sequence YQQGHYTHNPSNQR.

Belongs to the RAM family.

The protein resides in the nucleus. In terms of biological role, regulatory subunit of the mRNA-capping methyltransferase RNMT:RAMAC complex that methylates the N7 position of the added guanosine to the 5'-cap structure of mRNAs. Promotes the recruitment of the methyl donor, S-adenosyl-L-methionine, to RNMT. Regulates RNMT expression by a post-transcriptional stabilizing mechanism. Binds RNA. In Xenopus tropicalis (Western clawed frog), this protein is RNA guanine-N7 methyltransferase activating subunit (ramac).